Consider the following 1117-residue polypeptide: Leucine-rich repeats and immunoglobulin-like domains protein 3 (1117 aa).

An N-terminal signal peptide occupies residues 1 to 24 (MGAPGLRAATAALGLLLCAGLGRA). Positions 38–74 (LLDDDAQRPCPAACHCLGDLLDCSRRRLVRLPDPLPA) constitute an LRRNT domain. LRR repeat units follow at residues 75–98 (WVTRLDLSHNRLSFIQTSSLSHLQ), 99–120 (SLQEVKLNNNELETIPNLGSIS), 122–143 (NIRQLSLAGNAIDKILPEQLEA), 146–168 (SLETLDLSNNNISELRTAFPPLQ), 169–189 (LKYLYINNNRVSSMEPGYFDN), 193–214 (TLLVLKLNRNRISAIPPKMFKL), 216–237 (QLQHLELNRNKIKNVDGLTFQG), 240–261 (ALKSLKMQRNGVTKLMDGAFWG), 264–285 (NMEVLQLDHNNLTEITKGWLYG), 288–309 (MLRELHLSQNAINRISPDAWEF), 312–333 (KLSELDLTFNHLSRLDDSSFLG), 336–357 (LLNALHIGNNKVSYIADCAFRG), 360–382 (SLKTLDLRNNEISWTIEDMSGAF), 387–408 (RLRQLILQGNRIRSITKKAFAG), and 411–432 (TLEHLDLSGNAIMSLQSNAFSQ). Residue N156 is glycosylated (N-linked (GlcNAc...) asparagine). N-linked (GlcNAc...) asparagine glycosylation occurs at N274. N-linked (GlcNAc...) asparagine glycans are attached at residues N442 and N469. The 52-residue stretch at 444–495 (SSLLCDCQLRWLPQWVAENNFQSFVNASCAHPQLLKGRSIFTVSPDGFVCDD) folds into the LRRCT domain. 3 consecutive Ig-like C2-type domains span residues 499 to 598 (PQIT…AKLT), 603 to 692 (PSFT…ATLT), and 697 to 783 (PSFL…VRLS). 2 disulfide bridges follow: C520-C581 and C624-C676. N-linked (GlcNAc...) asparagine glycosylation is found at N688 and N729. A disulfide bridge links C718 with C767. The chain crosses the membrane as a helical span at residues 810 to 830 (VVIIAVVCCVVGTSLVWVVII). The N-linked (GlcNAc...) asparagine glycan is linked to N1014. The interval 1019-1093 (DFSTGPEPGS…KERTDFREEN (75 aa)) is disordered. Over residues 1083 to 1093 (DKERTDFREEN) the composition is skewed to basic and acidic residues.

Interacts with EGFR, ERBB2 and ERBB4 (in vitro). As to expression, widely expressed.

It localises to the cell membrane. The protein resides in the cytoplasmic vesicle membrane. Functionally, plays a role in craniofacial and inner ear morphogenesis during embryonic development. Acts within the otic vesicle epithelium to control formation of the lateral semicircular canal in the inner ear, possibly by restricting the expression of NTN1. The sequence is that of Leucine-rich repeats and immunoglobulin-like domains protein 3 (Lrig3) from Mus musculus (Mouse).